The chain runs to 405 residues: Aspartic protease (405 aa).

Positions 1–21 (MISDTVIAILAVALVGSTVQA) are cleaved as a signal peptide. The propeptide at 22–81 (APVDATATSTSGIIAVPISKSAAQLAREADPVVSLDWLKKTKAQAQYKHKQANARLHSKR) is removed in mature form. In terms of domain architecture, Peptidase A1 spans 97–402 (WTGPITIGGQ…DVGNARVGFA (306 aa)). Aspartate 113 is an active-site residue. Cysteines 126 and 131 form a disulfide. Residue aspartate 290 is part of the active site. Cysteines 332 and 366 form a disulfide.

Belongs to the peptidase A1 family.

It localises to the secreted. Inhibited by pepstatin A. Possesses acidic protease activity. Hydrolyzes casein and azoalbumin in vitro. The sequence is that of Aspartic protease from Phaffia rhodozyma (Yeast).